Here is a 626-residue protein sequence, read N- to C-terminus: Cysteine desulfurase (626 aa).

Disordered regions lie at residues 1–21 (MTNTVPSVPAVPNLPTQSDPF) and 41–64 (AGVSEAESAPTPLSVPTPALPTTS). Residues 1–225 (MTNTVPSVPA…AGAVGFDIHQ (225 aa)) are cargo-loading domain. The tract at residues 226 to 626 (VRRDFPILQE…RRIQTGSLAL (401 aa)) is cysteine desulfurase domain. K444 bears the N6-(pyridoxal phosphate)lysine mark. Catalysis depends on C582, which acts as the Cysteine persulfide intermediate.

The protein belongs to the class-V pyridoxal-phosphate-dependent aminotransferase family. Csd subfamily. As to quaternary structure, there are 1-2 copies of this protein in each type 2A encapsulin shell. Pyridoxal 5'-phosphate serves as cofactor.

It localises to the encapsulin nanocompartment. It catalyses the reaction (sulfur carrier)-H + L-cysteine = (sulfur carrier)-SH + L-alanine. Its activity is regulated as follows. Encapsulated enzyme is 7-fold more active than encapsulated enzyme. Its function is as follows. Cargo protein of a type 2A encapsulin nanocompartment probably involved in sulfur metabolism. Cysteine desulfurases mobilize the sulfur from L-cysteine to yield L-alanine, an essential step in sulfur metabolism for biosynthesis of a variety of sulfur-containing biomolecules. The chain is Cysteine desulfurase from Synechococcus elongatus (strain ATCC 33912 / PCC 7942 / FACHB-805) (Anacystis nidulans R2).